Consider the following 679-residue polypeptide: Glycine--tRNA ligase beta subunit (679 aa).

It belongs to the class-II aminoacyl-tRNA synthetase family. In terms of assembly, tetramer of two alpha and two beta subunits.

The protein resides in the cytoplasm. It carries out the reaction tRNA(Gly) + glycine + ATP = glycyl-tRNA(Gly) + AMP + diphosphate. This Thermodesulfovibrio yellowstonii (strain ATCC 51303 / DSM 11347 / YP87) protein is Glycine--tRNA ligase beta subunit.